Consider the following 254-residue polypeptide: MILVIDVGNTNTVLGVYQDETLVHHWRLATSRQKTEDEYAMTVRSLFDHAGLQFQDIDGIVISSVVPPMMFSLEQMCKKYFHVTPMIIGPGIKTGLNIKYDNPKEVGADRIVNAVAAIELYGYPAIVVDFGTATTYCLINEKKQYAGGVIAPGIMISTEALYHRASKLPRIEIAKPKQVVGTNTIDSMQSGIFYGYVSQVDGVVKRMKAQAESEPKVIATGGLAKLIGTESETIDVIDSFLTLKGLQLIYKKNV.

6-13 provides a ligand contact to ATP; it reads DVGNTNTV. Substrate contacts are provided by residues Y100 and 107 to 110; that span reads GADR. D109 (proton acceptor) is an active-site residue. A K(+)-binding site is contributed by D129. T132 provides a ligand contact to ATP. T184 lines the substrate pocket.

Belongs to the type III pantothenate kinase family. In terms of assembly, homodimer. NH4(+) serves as cofactor. The cofactor is K(+).

It is found in the cytoplasm. It carries out the reaction (R)-pantothenate + ATP = (R)-4'-phosphopantothenate + ADP + H(+). It participates in cofactor biosynthesis; coenzyme A biosynthesis; CoA from (R)-pantothenate: step 1/5. Catalyzes the phosphorylation of pantothenate (Pan), the first step in CoA biosynthesis. This Halalkalibacterium halodurans (strain ATCC BAA-125 / DSM 18197 / FERM 7344 / JCM 9153 / C-125) (Bacillus halodurans) protein is Type III pantothenate kinase.